Consider the following 539-residue polypeptide: Probable protein kinase UbiB (539 aa).

The helical transmembrane segment at aspartate 23–tryptophan 43 threads the bilayer. The 368-residue stretch at arginine 125–leucine 492 folds into the Protein kinase domain. Residues leucine 131 to valine 139 and lysine 153 each bind ATP. Catalysis depends on aspartate 288, which acts as the Proton acceptor. The next 2 membrane-spanning stretches (helical) occupy residues leucine 494–alanine 514 and leucine 517–valine 537.

It belongs to the ABC1 family. UbiB subfamily.

It localises to the cell inner membrane. It functions in the pathway cofactor biosynthesis; ubiquinone biosynthesis [regulation]. Is probably a protein kinase regulator of UbiI activity which is involved in aerobic coenzyme Q (ubiquinone) biosynthesis. In Pseudomonas syringae pv. tomato (strain ATCC BAA-871 / DC3000), this protein is Probable protein kinase UbiB.